Consider the following 688-residue polypeptide: Glycine--tRNA ligase beta subunit (688 aa).

It belongs to the class-II aminoacyl-tRNA synthetase family. Tetramer of two alpha and two beta subunits.

It is found in the cytoplasm. It carries out the reaction tRNA(Gly) + glycine + ATP = glycyl-tRNA(Gly) + AMP + diphosphate. This Listeria welshimeri serovar 6b (strain ATCC 35897 / DSM 20650 / CCUG 15529 / CIP 8149 / NCTC 11857 / SLCC 5334 / V8) protein is Glycine--tRNA ligase beta subunit.